Consider the following 311-residue polypeptide: Methionyl-tRNA formyltransferase (311 aa).

(6S)-5,6,7,8-tetrahydrofolate is bound at residue 110–113; it reads SLLP.

It belongs to the Fmt family.

The enzyme catalyses L-methionyl-tRNA(fMet) + (6R)-10-formyltetrahydrofolate = N-formyl-L-methionyl-tRNA(fMet) + (6S)-5,6,7,8-tetrahydrofolate + H(+). Attaches a formyl group to the free amino group of methionyl-tRNA(fMet). The formyl group appears to play a dual role in the initiator identity of N-formylmethionyl-tRNA by promoting its recognition by IF2 and preventing the misappropriation of this tRNA by the elongation apparatus. In Streptococcus pyogenes serotype M18 (strain MGAS8232), this protein is Methionyl-tRNA formyltransferase.